A 99-amino-acid polypeptide reads, in one-letter code: UPF0235 protein Sbal_3028 (99 aa).

It belongs to the UPF0235 family.

This chain is UPF0235 protein Sbal_3028, found in Shewanella baltica (strain OS155 / ATCC BAA-1091).